The sequence spans 809 residues: MGCLCPGLTLPVSCLILVWAAGSGSVKVLRLTACFSDYISASTCEWKMDRPTNCSAQLRLSYQLNDEFSDNLTCIPENREDEVCVCRMLMDNIVSEDVYELDLWAGNQLLWNSSFKPSRHVKPRAPQNLTVHAISHTWLLTWSNPYPLKNHLWSELTYLVNISKEDDPTDFKIYNVTYMDPTLRVTASTLKSRATYSARVKARAQNYNSTWSEWSPSTTWHNYYEQPLEQRLPLGVSISCVVILAICLSCYFSIIKIKKEWWDQIPNPAHSPLVAIVLQDSQVSLWGKQSRGQEPAKCPRWKTCLTKLLPCLLEHGLQKEEDSSKTVRNGPFQSPGKSAWHTVEVNHTILRPEIISVVPCVELCEAQVESEEEEVEEDRGSFCPSPESSGSGFQEGREGVAARLTESLFLGLLGAENGALGESCLLPPLGSAHMPWARISSAGPQEAASQGEEQPLNPESNPLATLTQSPGSLAFTEAPAVVADNPAYRSFSNSLSQPRGPGELDSDPQLAEHLGQVDPSIPSAPQPSEPPTALQPEPETWEQMLRQSVLQQGAAPAPASAPTGGYREFAQVVKQGGGAAGSGPSGEAGYKAFSSLLAGSAVCPGQSGVEASSGEGGYRPYESPDPGAPAPVPVPLFTFGLDVEPPHSPQNSLLPGGSPELPGPEPTVKGEDPRKPLLSAQQATDSLRDDLGSGIVYSALTCHLCGHLKQCHGQEEHGEAHTVASPCCGCCCGDRSSPPVSPVRALDPPPGGVPLEAGLSLASLGSLGLSEERKPSLFFQPAPGNAQSSSQTPLTVAMLSTGPTCTSAS.

The signal sequence occupies residues 1–25; it reads MGCLCPGLTLPVSCLILVWAAGSGS. The Extracellular segment spans residues 26-231; the sequence is VKVLRLTACF…NYYEQPLEQR (206 aa). Cys-34 and Cys-44 form a disulfide bridge. N-linked (GlcNAc...) asparagine glycosylation is found at Asn-53 and Asn-71. Cys-74 and Cys-86 are disulfide-bonded. Asn-112, Asn-128, and Asn-161 each carry an N-linked (GlcNAc...) asparagine glycan. The Fibronectin type-III domain maps to 125-222; sequence APQNLTVHAI…EWSPSTTWHN (98 aa). Ser-163 carries the phosphoserine modification. N-linked (GlcNAc...) asparagine glycans are attached at residues Asn-175 and Asn-208. Residues 211–215 carry the WSXWS motif motif; the sequence is WSEWS. Residues 232–255 traverse the membrane as a helical segment; the sequence is LPLGVSISCVVILAICLSCYFSII. Over 256–809 the chain is Cytoplasmic; it reads KIKKEWWDQI…STGPTCTSAS (554 aa). The short motif at 261 to 269 is the Box 1 motif element; sequence WWDQIPNPA. 2 disordered regions span residues 369–397 and 441–468; these read ESEE…QEGR and SAGP…TLTQ. Polar residues predominate over residues 447 to 468; it reads AASQGEEQPLNPESNPLATLTQ. The residue at position 488 (Tyr-488) is a Phosphotyrosine. A disordered region spans residues 514 to 536; sequence LGQVDPSIPSAPQPSEPPTALQP. A phosphotyrosine mark is found at Tyr-566, Tyr-590, and Tyr-618. A disordered region spans residues 606 to 674; the sequence is QSGVEASSGE…EPTVKGEDPR (69 aa). The short motif at 695-700 is the ITIM motif element; it reads IVYSAL.

It belongs to the type I cytokine receptor family. Type 4 subfamily. The functional IL4 receptor is formed by initial binding of IL4 to IL4R. Subsequent recruitment to the complex of the common gamma chain, in immune cells, creates a type I receptor and, in non-immune cells, of IL13RA1 forms a type II receptor. IL4R can also interact with the IL13/IL13RA1 complex to form a similar type II receptor. Interacts with PIK3C3. Interacts with the SH2-containing phosphatases, PTPN6/SHIP1, PTPN11/SHIP2 and INPP5D/SHIP. Interacts with JAK1 through a Box 1-containing region; inhibited by SOCS5. Interacts with SOCS5; inhibits IL4 signaling. Interacts with JAK3. Interacts with CLM1. Interacts with IL13RA2. In terms of processing, on IL4 binding, phosphorylated on tyrosine residues in the cytoplasmic domain.

It is found in the cell membrane. It localises to the secreted. In terms of biological role, receptor for both interleukin 4 and interleukin 13. Couples to the JAK1/2/3-STAT6 pathway. The IL4 response is involved in promoting Th2 differentiation. The IL4/IL13 responses are involved in regulating IgE production and, chemokine and mucus production at sites of allergic inflammation. In certain cell types, can signal through activation of insulin receptor substrates, IRS1/IRS2. The protein is Interleukin-4 receptor subunit alpha (IL4R) of Equus caballus (Horse).